We begin with the raw amino-acid sequence, 274 residues long: uncharacterized protein (274 aa).

An N-terminal signal peptide occupies residues 1 to 19; the sequence is MKRINKVLLSLLCLVIAYA.

This is an uncharacterized protein from Rickettsia prowazekii (strain Madrid E).